The primary structure comprises 212 residues: Orotate phosphoribosyltransferase (212 aa).

Residues arginine 94, lysine 98, histidine 100, and 120-128 (EDLISTGGS) contribute to the 5-phospho-alpha-D-ribose 1-diphosphate site. Orotate is bound at residue serine 124.

It belongs to the purine/pyrimidine phosphoribosyltransferase family. PyrE subfamily. Homodimer. Requires Mg(2+) as cofactor.

It carries out the reaction orotidine 5'-phosphate + diphosphate = orotate + 5-phospho-alpha-D-ribose 1-diphosphate. The protein operates within pyrimidine metabolism; UMP biosynthesis via de novo pathway; UMP from orotate: step 1/2. Its function is as follows. Catalyzes the transfer of a ribosyl phosphate group from 5-phosphoribose 1-diphosphate to orotate, leading to the formation of orotidine monophosphate (OMP). The polypeptide is Orotate phosphoribosyltransferase (Bacillus pumilus (strain SAFR-032)).